Reading from the N-terminus, the 130-residue chain is Small ribosomal subunit protein uS8 (130 aa).

The protein belongs to the universal ribosomal protein uS8 family. Part of the 30S ribosomal subunit. Contacts proteins S5 and S12.

Its function is as follows. One of the primary rRNA binding proteins, it binds directly to 16S rRNA central domain where it helps coordinate assembly of the platform of the 30S subunit. This Phytoplasma australiense protein is Small ribosomal subunit protein uS8.